We begin with the raw amino-acid sequence, 302 residues long: Bacteriochlorophyll synthase 33 kDa chain (302 aa).

9 helical membrane-spanning segments follow: residues 25–45, 49–69, 97–117, 119–139, 145–165, 166–186, 223–243, 246–266, and 275–295; these read ITWFPPIWAYLCGTVSVGIWP, WPLVLLGMVLAGPLVCGMSQA, WGLYIALLMTVLSLAVGWMLG, WGFGATVFGVLAAWAYSVEPI, GWWGPGLVALCYEGLPWFTGA, AVLSAGAPSFFIVTVALLYAF, LACTVMAMAQILVITLLVIWG, IHAGIITALLVAQLFAMRVLL, and WYNGTGVTLYVLGMMVAAFAI.

Its subcellular location is the cell membrane. It participates in porphyrin-containing compound metabolism; bacteriochlorophyll biosynthesis (light-independent). Catalyzes the esterification of bacteriochlorophyllide a by geranylgeraniol-PPi. The polypeptide is Bacteriochlorophyll synthase 33 kDa chain (bchG) (Cereibacter sphaeroides (strain ATCC 17023 / DSM 158 / JCM 6121 / CCUG 31486 / LMG 2827 / NBRC 12203 / NCIMB 8253 / ATH 2.4.1.) (Rhodobacter sphaeroides)).